Consider the following 436-residue polypeptide: UPF0597 protein YhaM (436 aa).

Belongs to the UPF0597 family.

The protein is UPF0597 protein YhaM of Escherichia coli O127:H6 (strain E2348/69 / EPEC).